The following is a 957-amino-acid chain: MTQTLSQLENSGAFIERHIGPDAAQQQEMLNAVGAQSLNALTGQIVPKDIQLATPPQVGAPATEYAALAELKAIASRNKRFTSYIGMGYTAVQLPPVILRNMLENPGWYTAYTPYQPEVSQGRLEALLNFQQVTLDLTGLDMASASLLDEATAAAEAMAMAKRVSKLKNSNRFFVASDVHPQTLDVVRTRAETFGFEVIVDDAQKVLDHQDVFGVLLQQVGTTGEIHDYTALISELKSRKIVVSVAADIMALVLLTAPGKQGADIVFGSAQRFGVPMGYGGPHAAFFAAKDEYKRSMPGRIIGVSKDAAGNTALRMAMQTREQHIRREKANSNICTSQVLLANIASLYAVYHGPVGLKRIANRIHRLTDILAAGLQQKGLKLRHAHYFDTLCVEVADKAGVLARAEAAEINLRSDILNAVGITLDETTTRENVMQLFSVLLGDNHGLEIDTLDKDVAHDSRSIQPAMLRDDEILTHPVFNRYHSETEMMRYMHSLERKDLALNQAMIPLGSCTMKLNSAAEMIPITWPEFAELHPFCPPEQAEGYQQMIAQLADWLVKLTGYDAVCMQPNSGAQGEYAGLLAIRHYHESRNEGHRDICLIPASAHGTNPASAHMAGMQVVVVACDKNGNIDLTDLRAKAEQAGDNLSCIMVTYPSTHGVYEETIREVCEVVHQFGGQVYLDGANMNAQVGITSPGFIGADVSHLNLHKTFCIPHGGGGPGMGPIGVKAHLAPFVPGHSVVQIEGMLTRQGAVSAAPFGSASILPISWMYIRMMGAEGLKKASQVAILNANYIASRLQDAFPVLYTGRDGRVAHECILDIRPLKEETSISELDIAKRLIDYGFHAPTMSFPVAGTLMVEPTESESKVELDRFIDAMLAIRAEIDQVKAGVWPLEDNPLVNAPHIQSELVAEWAHPYSREVAVFPAGVADKYWPTVKRLDDVYGDRNLFCSCVPISEYQ.

Residue lysine 708 is modified to N6-(pyridoxal phosphate)lysine.

This sequence belongs to the GcvP family. The glycine cleavage system is composed of four proteins: P, T, L and H. Pyridoxal 5'-phosphate is required as a cofactor.

The catalysed reaction is N(6)-[(R)-lipoyl]-L-lysyl-[glycine-cleavage complex H protein] + glycine + H(+) = N(6)-[(R)-S(8)-aminomethyldihydrolipoyl]-L-lysyl-[glycine-cleavage complex H protein] + CO2. In terms of biological role, the glycine cleavage system catalyzes the degradation of glycine. The P protein binds the alpha-amino group of glycine through its pyridoxal phosphate cofactor; CO(2) is released and the remaining methylamine moiety is then transferred to the lipoamide cofactor of the H protein. The sequence is that of Glycine dehydrogenase (decarboxylating) from Shigella boydii serotype 18 (strain CDC 3083-94 / BS512).